The sequence spans 288 residues: Probable endonuclease 4 (288 aa).

Zn(2+) contacts are provided by histidine 75, histidine 115, glutamate 153, aspartate 187, histidine 190, histidine 224, aspartate 237, histidine 239, and glutamate 269.

This sequence belongs to the AP endonuclease 2 family. The cofactor is Zn(2+).

The enzyme catalyses Endonucleolytic cleavage to 5'-phosphooligonucleotide end-products.. Endonuclease IV plays a role in DNA repair. It cleaves phosphodiester bonds at apurinic or apyrimidinic (AP) sites, generating a 3'-hydroxyl group and a 5'-terminal sugar phosphate. The chain is Probable endonuclease 4 from Chlamydia trachomatis serovar L2 (strain ATCC VR-902B / DSM 19102 / 434/Bu).